Reading from the N-terminus, the 515-residue chain is 1-pyrroline-5-carboxylate dehydrogenase (515 aa).

Catalysis depends on residues glutamate 286 and cysteine 320.

It belongs to the aldehyde dehydrogenase family. RocA subfamily.

The catalysed reaction is L-glutamate 5-semialdehyde + NAD(+) + H2O = L-glutamate + NADH + 2 H(+). The protein operates within amino-acid degradation; L-proline degradation into L-glutamate; L-glutamate from L-proline: step 2/2. This is 1-pyrroline-5-carboxylate dehydrogenase from Bacillus cereus (strain ATCC 10987 / NRS 248).